The chain runs to 452 residues: Pup--protein ligase (452 aa).

Glu-9 contributes to the Mg(2+) binding site. Arg-53 is an ATP binding site. Residue Tyr-55 participates in Mg(2+) binding. Catalysis depends on Asp-57, which acts as the Proton acceptor. Position 63 (Glu-63) interacts with Mg(2+). ATP-binding residues include Thr-66 and Trp-419.

This sequence belongs to the Pup ligase/Pup deamidase family. Pup-conjugating enzyme subfamily.

It catalyses the reaction ATP + [prokaryotic ubiquitin-like protein]-L-glutamate + [protein]-L-lysine = ADP + phosphate + N(6)-([prokaryotic ubiquitin-like protein]-gamma-L-glutamyl)-[protein]-L-lysine.. It functions in the pathway protein degradation; proteasomal Pup-dependent pathway. The protein operates within protein modification; protein pupylation. Functionally, catalyzes the covalent attachment of the prokaryotic ubiquitin-like protein modifier Pup to the proteasomal substrate proteins, thereby targeting them for proteasomal degradation. This tagging system is termed pupylation. The ligation reaction involves the side-chain carboxylate of the C-terminal glutamate of Pup and the side-chain amino group of a substrate lysine. The chain is Pup--protein ligase from Gordonia bronchialis (strain ATCC 25592 / DSM 43247 / BCRC 13721 / JCM 3198 / KCTC 3076 / NBRC 16047 / NCTC 10667) (Rhodococcus bronchialis).